Consider the following 469-residue polypeptide: Protein POLLENLESS 3-LIKE 1 (469 aa).

A disordered region spans residues 1 to 20 (MRRRESRGAKGGGFLTPPPS). 3 TPR repeats span residues 88-121 (DSALKDMVVVLKQLNRFDEGIEAIKSFRYLCPFE), 124-157 (DSIDNLLLELYMKSGRITEVAELLEHKLRTLEQD), and 184-217 (ARILGNLAWVHLQLHNYGIAEQYYRNALSLEPDN). Positions 139 to 191 (RITEVAELLEHKLRTLEQDKHYGGRIKIAKRSHEEQNNKTIEQEKARILGNLA) form a coiled coil. The span at 314 to 338 (NIHKTNSHASSESVEQNSPGLTTQP) shows a compositional bias: polar residues. The interval 314–339 (NIHKTNSHASSESVEQNSPGLTTQPR) is disordered.

This sequence belongs to the MS5 protein family. As to expression, expressed in floral and vegetative organs. Also barely detectable in leaves and stems.

It localises to the nucleus. Probably involved in the regulation of cell division. In Arabidopsis thaliana (Mouse-ear cress), this protein is Protein POLLENLESS 3-LIKE 1.